The following is a 389-amino-acid chain: Chitin-binding protein CbpD (389 aa).

Residues 1–25 (MKHYSATLALLPLTLALFLPQAAHA) form the signal peptide. Residues 26 to 208 (HGSMETPPSR…EAFYACIDVS (183 aa)) form the Chitin-binding type-4 domain.

Can be detected in the extracellular supernatant as a 43 kDa protein and a 23 kDa protein, both proteins have the same N-terminus. Only the larger protein binds chitin, which may protect it from further processing and/or degradation by elastase (lasB). It is not clear whether the short form is functional or a degradation product.

It localises to the secreted. Binds chitin but does not hydrolyze it, has no detectable protease or staphylolytic activity. The chain is Chitin-binding protein CbpD from Pseudomonas aeruginosa (strain ATCC 15692 / DSM 22644 / CIP 104116 / JCM 14847 / LMG 12228 / 1C / PRS 101 / PAO1).